The primary structure comprises 565 residues: MKSPAPSRPQKMALIPACIFLCFAALSVQAEETSVTPQPPDILLGPLFNDVQNAKLFPDQKTFAGAVPNSDPLMILADYRMQQNQSGFDLRHFVNVNFTLPKEGEKYVPPEGQSLREHIDGLWPILTRSTENTEKWDSLLPLPEPYVVPGGRFREVYYWDSYFTMLGLAESGHWDKVADMVANFAHEIDTYGHIPNGNRSYYLSRSQPPFFALMVELLAQHEGDAALKQYLPQMQKEYAYWMDGVENLQAGQQEKRVVKLQDGTLLNRYWDDRDTPRPESWVEDIATAKSNPNRPATEIYRDLRSAAASGWDFSSRWMDNPQQLNTLRTTSIVPVDLNSLMFKMEKILARASKAAGDNAMANQYETLANARQKGIEKYLWNDQQGWYADYDLKSHKVRNQLTAAALFPLYVNAAAKDRANKMATATKTHLLQPGGLNTTSVKSGQQWDAPNGWAPLQWVATEGLQNYGQKEVAMDISWHFLTNVQHTYDREKKLVEKYDVSTTGTGGGGGEYPLQDGFGWTNGVTLKMLDLICPKEQPCDNVPATRPLSESTTQPVKPKEAEPTL.

Positions Met1 to Ala30 are cleaved as a signal peptide. Residues Arg152, Trp159–Asp160, Asn196, Arg205–Gln207, Arg277–Glu279, and Gly310 contribute to the substrate site. Residues Asp312 and Glu496 each act as proton donor/acceptor in the active site. Glu511 is a binding site for substrate. Residues Cys539–Leu565 form a disordered region.

This sequence belongs to the glycosyl hydrolase 37 family. Monomer.

The protein localises to the periplasm. It catalyses the reaction alpha,alpha-trehalose + H2O = alpha-D-glucose + beta-D-glucose. Provides the cells with the ability to utilize trehalose at high osmolarity by splitting it into glucose molecules that can subsequently be taken up by the phosphotransferase-mediated uptake system. In Shigella dysenteriae serotype 1 (strain Sd197), this protein is Periplasmic trehalase.